The sequence spans 60 residues: Large ribosomal subunit protein bL32 (60 aa).

Residues Met1–Asp60 are disordered. Positions Lys7–Arg16 are enriched in basic residues. Over residues Leu22–Lys31 the composition is skewed to polar residues.

Belongs to the bacterial ribosomal protein bL32 family.

This chain is Large ribosomal subunit protein bL32, found in Francisella tularensis subsp. tularensis (strain SCHU S4 / Schu 4).